Reading from the N-terminus, the 1396-residue chain is DNA-directed RNA polymerase subunit beta' (1396 aa).

Cysteine 73, cysteine 75, cysteine 88, and cysteine 91 together coordinate Zn(2+). Mg(2+)-binding residues include aspartate 467, aspartate 469, and aspartate 471. 4 residues coordinate Zn(2+): cysteine 817, cysteine 891, cysteine 898, and cysteine 901.

This sequence belongs to the RNA polymerase beta' chain family. As to quaternary structure, the RNAP catalytic core consists of 2 alpha, 1 beta, 1 beta' and 1 omega subunit. When a sigma factor is associated with the core the holoenzyme is formed, which can initiate transcription. The cofactor is Mg(2+). Requires Zn(2+) as cofactor.

The catalysed reaction is RNA(n) + a ribonucleoside 5'-triphosphate = RNA(n+1) + diphosphate. Its function is as follows. DNA-dependent RNA polymerase catalyzes the transcription of DNA into RNA using the four ribonucleoside triphosphates as substrates. The polypeptide is DNA-directed RNA polymerase subunit beta' (Orientia tsutsugamushi (strain Boryong) (Rickettsia tsutsugamushi)).